The sequence spans 304 residues: MLRGSASSTSMEKAKGKEWTSTEKSREEDQQASNQPNSIALPGTSAKRTKEKMSIKGSKVLCPKKKAEHTDNPRPQKKIPIPPLPSKLPPVNLIHRDILRAWCQQLKLSSKGQKLDAYKRLCAFAYPNQKDFPSTAKEAKIRKSLQKKLKVEKGETSLQSSETHPPEVALPPVGEPPALENSTALLEGVNTVVVTTSAPEALLASWARISARARTPEAVESPQEASGVRWCVVHGKSLPADTDGWVHLQFHAGQAWVPEKQEGRVSALFLLPASNFPPPHLEDNMLCPKCVHRNKVLIKSLQWE.

The span at 1-11 (MLRGSASSTSM) shows a compositional bias: polar residues. Disordered stretches follow at residues 1–84 (MLRG…IPPL) and 147–176 (KKLKVEKGETSLQSSETHPPEVALPPVGEP). Basic and acidic residues predominate over residues 12-29 (EKAKGKEWTSTEKSREED). The residue at position 215 (Thr215) is a Phosphothreonine. A phosphoserine mark is found at Ser221 and Ser226.

In terms of assembly, interacts with DPPA2. Interacts with PCGF1.

It localises to the nucleus. May be involved in the maintenance of active epigenetic status of target genes. May inhibit differentiation of embryonic cells into a primitive ectoderm lineage. This chain is Developmental pluripotency-associated protein 4 (DPPA4), found in Homo sapiens (Human).